Reading from the N-terminus, the 458-residue chain is E3 ubiquitin-protein ligase RNF25 (458 aa).

The 111-residue stretch at 18-128 (SEVEVLESIY…EKGKEILTDN (111 aa)) folds into the RWD domain. Zn(2+) is bound by residues Cys135, Cys138, Cys153, His155, Cys161, Cys197, and Cys200. The segment at 135 to 201 (CVICLYGFQE…AVGVQCPVCR (67 aa)) adopts an RING-type zinc-finger fold. Disordered regions lie at residues 267-299 (PPAP…TSAT) and 317-458 (KTPG…EDGS). Composition is skewed to polar residues over residues 282-299 (GSHQ…TSAT) and 362-372 (LKGTSDTQKLQ). Composition is skewed to basic and acidic residues over residues 377-388 (PLKESMDLKPES) and 412-423 (RTRDCAHWERAK). Positions 432–443 (PRLPRGRGAYRP) are enriched in low complexity.

This sequence belongs to the RNF25 family. Interacts with UBE2D2, and may also interact with UBE2E1 and UBE2E3. Interacts with RELA/p65. Post-translationally, ubiquitinated; autoubiquitinated.

Its subcellular location is the cytoplasm. The enzyme catalyses S-ubiquitinyl-[E2 ubiquitin-conjugating enzyme]-L-cysteine + [acceptor protein]-L-lysine = [E2 ubiquitin-conjugating enzyme]-L-cysteine + N(6)-ubiquitinyl-[acceptor protein]-L-lysine.. The protein operates within protein modification; protein ubiquitination. Its function is as follows. E3 ubiquitin-protein ligase that plays a key role in the RNF14-RNF25 translation quality control pathway, a pathway that takes place when a ribosome has stalled during translation, and which promotes ubiquitination and degradation of translation factors on stalled ribosomes. Catalyzes ubiquitination of RPS27A in response to ribosome collisions, promoting activation of RNF14. RNF25 catalyzes ubiquitination of other ribosomal proteins on stalled ribosomes, such as RPL0, RPL1, RPL12, RPS13 and RPS17. Also involved in ubiquitination and degradation of stalled ETF1/eRF1. Independently of its function in the response to stalled ribosomes, mediates ubiquitination and subsequent proteasomal degradation of NKD2. May also stimulate transcription mediated by NF-kappa-B via its interaction with RELA/p65. In Bos taurus (Bovine), this protein is E3 ubiquitin-protein ligase RNF25 (RNF25).